Reading from the N-terminus, the 905-residue chain is Core protein VP3 (905 aa).

This sequence belongs to the orbivirus VP3 family.

The protein resides in the virion. Its function is as follows. The VP3 protein is one of the five proteins (with VP1, VP4, VP6 and VP7) which form the inner capsid of the virus. The sequence is that of Core protein VP3 (Segment-3) from African horse sickness virus 6 (AHSV-6).